We begin with the raw amino-acid sequence, 196 residues long: Holliday junction branch migration complex subunit RuvA (196 aa).

Residues 1-63 form a domain I region; it reads MINKIYGKIV…DDDVKLFGFL (63 aa). Residues 64–142 are domain II; sequence NISEREVFEN…KGDESSSYML (79 aa). Position 143 (Lys-143) is a region of interest, flexible linker. Residues 143 to 196 form a domain III region; sequence KFKELEQSIVNMGFDRKLVVVAFREIMLSDKFLILKEAEQEQFLFTETLKRLSV.

This sequence belongs to the RuvA family. As to quaternary structure, homotetramer. Forms an RuvA(8)-RuvB(12)-Holliday junction (HJ) complex. HJ DNA is sandwiched between 2 RuvA tetramers; dsDNA enters through RuvA and exits via RuvB. An RuvB hexamer assembles on each DNA strand where it exits the tetramer. Each RuvB hexamer is contacted by two RuvA subunits (via domain III) on 2 adjacent RuvB subunits; this complex drives branch migration. In the full resolvosome a probable DNA-RuvA(4)-RuvB(12)-RuvC(2) complex forms which resolves the HJ.

It localises to the cytoplasm. In terms of biological role, the RuvA-RuvB-RuvC complex processes Holliday junction (HJ) DNA during genetic recombination and DNA repair, while the RuvA-RuvB complex plays an important role in the rescue of blocked DNA replication forks via replication fork reversal (RFR). RuvA specifically binds to HJ cruciform DNA, conferring on it an open structure. The RuvB hexamer acts as an ATP-dependent pump, pulling dsDNA into and through the RuvAB complex. HJ branch migration allows RuvC to scan DNA until it finds its consensus sequence, where it cleaves and resolves the cruciform DNA. This chain is Holliday junction branch migration complex subunit RuvA, found in Borrelia recurrentis (strain A1).